A 128-amino-acid polypeptide reads, in one-letter code: Fluoride-specific ion channel FluC (128 aa).

Helical transmembrane passes span 5–25 (IVAIFVGAGLGALLRWFLSLA), 35–55 (LGTLASNLIGGYVIGVAAVVF), 67–87 (LFVITGFLGGLTTFSTYSVEV), and 96–116 (FGWALAVAALHLTGSFALTAL). 2 residues coordinate Na(+): glycine 75 and threonine 78.

Belongs to the fluoride channel Fluc/FEX (TC 1.A.43) family.

It is found in the cell inner membrane. The catalysed reaction is fluoride(in) = fluoride(out). Na(+) is not transported, but it plays an essential structural role and its presence is essential for fluoride channel function. Its function is as follows. Fluoride-specific ion channel. Important for reducing fluoride concentration in the cell, thus reducing its toxicity. The chain is Fluoride-specific ion channel FluC from Burkholderia orbicola (strain MC0-3).